The sequence spans 341 residues: S-adenosylmethionine:tRNA ribosyltransferase-isomerase (341 aa).

It belongs to the QueA family. In terms of assembly, monomer.

Its subcellular location is the cytoplasm. The catalysed reaction is 7-aminomethyl-7-carbaguanosine(34) in tRNA + S-adenosyl-L-methionine = epoxyqueuosine(34) in tRNA + adenine + L-methionine + 2 H(+). It participates in tRNA modification; tRNA-queuosine biosynthesis. Transfers and isomerizes the ribose moiety from AdoMet to the 7-aminomethyl group of 7-deazaguanine (preQ1-tRNA) to give epoxyqueuosine (oQ-tRNA). This chain is S-adenosylmethionine:tRNA ribosyltransferase-isomerase, found in Halothermothrix orenii (strain H 168 / OCM 544 / DSM 9562).